We begin with the raw amino-acid sequence, 475 residues long: Glutamate--tRNA ligase 2 (475 aa).

Positions 9 to 19 match the 'HIGH' region motif; that stretch reads PSPTGFLHIGS. A 'KMSKS' region motif is present at residues 238-242; that stretch reads KLSKR. Residue lysine 241 coordinates ATP.

This sequence belongs to the class-I aminoacyl-tRNA synthetase family. Glutamate--tRNA ligase type 1 subfamily. As to quaternary structure, monomer.

Its subcellular location is the cytoplasm. It carries out the reaction tRNA(Glu) + L-glutamate + ATP = L-glutamyl-tRNA(Glu) + AMP + diphosphate. Its function is as follows. Catalyzes the attachment of glutamate to tRNA(Glu) in a two-step reaction: glutamate is first activated by ATP to form Glu-AMP and then transferred to the acceptor end of tRNA(Glu). The protein is Glutamate--tRNA ligase 2 of Bartonella quintana (strain Toulouse) (Rochalimaea quintana).